The sequence spans 265 residues: Probable autolysin SsaALP (265 aa).

The signal sequence occupies residues 1–25 (MKKLAFAITATSGAAAFLTHHDAQA). LysM domains are found at residues 27-70 (TQHT…VISV) and 89-132 (SSHT…TLQI). Residues 72 to 92 (GSDAQNTSNTSPQAGSASSHT) form a disordered region. Residues 74–92 (DAQNTSNTSPQAGSASSHT) are compositionally biased toward polar residues. A Peptidase C51 domain is found at 141-265 (TPTATTGSNG…SEVSSYAFIH (125 aa)).

The enzyme catalyses Hydrolyzes the link between N-acetylmuramoyl residues and L-amino acid residues in certain cell-wall glycopeptides.. Functionally, has weak lytic activity toward S.aureus cells. The polypeptide is Probable autolysin SsaALP (Staphylococcus aureus (strain NCTC 8325 / PS 47)).